The sequence spans 369 residues: MLKEVPIKRRQSTKIYVGNVPVGGDAPIAVQSMTNTRTTDIEATIAQIKALERVGADIVRVSVPTMDAAEAFKVIKQQVNVPLVADIHFDYRIALKVAEYGVDCLRINPGNIGNEERIRAVVDCAKDKNIPIRIGVNAGSLERDLQEKYGEPTPQALLESALRHVEILDRFNFDQFKVSVKASDVFLAVESYRLLAKAIKQPIHLGITEAGGARAGSVKSAIGLGLLLSEGIGDTLRVSLAADPVDEVKVGFDILKSLRIRSRGINFVACPTCSRQEIDVIATVNALEQRLEDILTPMDVSIIGCVVNGPGEALVSDLGVTGSNKMSGFYLDGVRQKERFDNDKLIDQLEAKIRAKVAQQHHRIAIEQI.

[4Fe-4S] cluster is bound by residues Cys270, Cys273, Cys305, and Glu312.

It belongs to the IspG family. [4Fe-4S] cluster serves as cofactor.

It catalyses the reaction (2E)-4-hydroxy-3-methylbut-2-enyl diphosphate + oxidized [flavodoxin] + H2O + 2 H(+) = 2-C-methyl-D-erythritol 2,4-cyclic diphosphate + reduced [flavodoxin]. The protein operates within isoprenoid biosynthesis; isopentenyl diphosphate biosynthesis via DXP pathway; isopentenyl diphosphate from 1-deoxy-D-xylulose 5-phosphate: step 5/6. Converts 2C-methyl-D-erythritol 2,4-cyclodiphosphate (ME-2,4cPP) into 1-hydroxy-2-methyl-2-(E)-butenyl 4-diphosphate. The protein is 4-hydroxy-3-methylbut-2-en-1-yl diphosphate synthase (flavodoxin) of Haemophilus ducreyi (strain 35000HP / ATCC 700724).